A 191-amino-acid chain; its full sequence is LOB domain-containing protein 19 (191 aa).

In terms of domain architecture, LOB spans 15–117 (GPCGACKFLR…AELAHVQARL (103 aa)).

The protein belongs to the LOB domain-containing protein family. In terms of tissue distribution, expressed in shoots, roots and floral tissues, but not in stems or leaves.

The polypeptide is LOB domain-containing protein 19 (LBD19) (Arabidopsis thaliana (Mouse-ear cress)).